The chain runs to 167 residues: Ribosome maturation factor RimM (167 aa).

Residues 92-166 (DDEFYHTDLI…RIVADPPEGL (75 aa)) form the PRC barrel domain.

Belongs to the RimM family. In terms of assembly, binds ribosomal protein uS19.

The protein resides in the cytoplasm. In terms of biological role, an accessory protein needed during the final step in the assembly of 30S ribosomal subunit, possibly for assembly of the head region. Essential for efficient processing of 16S rRNA. May be needed both before and after RbfA during the maturation of 16S rRNA. It has affinity for free ribosomal 30S subunits but not for 70S ribosomes. The sequence is that of Ribosome maturation factor RimM from Ruegeria pomeroyi (strain ATCC 700808 / DSM 15171 / DSS-3) (Silicibacter pomeroyi).